An 886-amino-acid polypeptide reads, in one-letter code: Microsomal triacylglycerol transfer protein (886 aa).

An N-terminal signal peptide occupies residues 1-27; sequence MENKNKKCLRTLLLLALFLGLLEDGKT. A Vitellogenin domain is found at 30–653; it reads IAPNSQQIFK…SQASSFKLGI (624 aa). N358, N484, N502, and N616 each carry an N-linked (GlcNAc...) asparagine glycan.

Its subcellular location is the endoplasmic reticulum. It is found in the golgi apparatus. The enzyme catalyses a 1,2-diacyl-sn-glycero-3-phosphocholine(in) = a 1,2-diacyl-sn-glycero-3-phosphocholine(out). The catalysed reaction is a 1,2-diacyl-sn-glycero-3-phosphoethanolamine(in) = a 1,2-diacyl-sn-glycero-3-phosphoethanolamine(out). Catalyzes the transport of phospholipids such as phosphatidylethanolamine (1,2-diacyl-sn-glycero-3-phosphoethanolamine) and phosphatidylcholine (1,2-diacyl-sn-glycero-3-phosphocholine) between membranes. Required for the assembly and secretion of plasma lipoproteins that contain apolipoprotein B. The polypeptide is Microsomal triacylglycerol transfer protein (Drosophila melanogaster (Fruit fly)).